A 159-amino-acid polypeptide reads, in one-letter code: Dynein 18 kDa light chain, flagellar outer arm (159 aa).

EF-hand domains lie at 18–53, 54–89, and 129–159; these read EEMD…LGQN, PTEE…NKQM, and ELTV…ALLS. Residues Asp-31, Asp-33, Ser-35, Thr-37, Glu-42, Asp-67, Asp-69, Ser-71, Cys-73, and Glu-78 each coordinate Ca(2+).

Consists of at least 3 heavy chains (alpha, beta and gamma), 2 intermediate chains and 8 light chains.

Its subcellular location is the cell projection. The protein resides in the cilium. It localises to the flagellum. May be involved in the calcium-mediated regulation of dynein motor function. Binds 1 mole of calcium. The sequence is that of Dynein 18 kDa light chain, flagellar outer arm from Chlamydomonas reinhardtii (Chlamydomonas smithii).